We begin with the raw amino-acid sequence, 270 residues long: L-fucose dehydrogenase (270 aa).

NAD(+)-binding residues include Arg19, Ile21, Asp40, Lys41, Asp62, Val63, Asn89, Tyr154, Lys158, Ile187, Thr189, and Leu191. Tyr154 acts as the Proton acceptor in catalysis.

Belongs to the short-chain dehydrogenases/reductases (SDR) family. In terms of assembly, homotetramer. Highly expressed in brain, placenta, liver and kidney.

It is found in the cytoplasm. It carries out the reaction L-fucose + NAD(+) = L-fucono-1,5-lactone + NADH + H(+). It catalyses the reaction D-arabinose + NAD(+) = D-arabinono-1,5-lactone + NADH + H(+). The catalysed reaction is L-galactose + NAD(+) = L-galactono-1,5-lactone + NADH + H(+). The protein operates within carbohydrate degradation; L-fucose degradation. In terms of biological role, catalyzes the NAD(+)-dependent oxidation of L-fucose, yielding L-fucono-1,5-lactone, which rapidly converts spontaneously to L-fucone-1,4-lactone. Can also act on D-arabinose and L-galactose, with lower catalytic efficiency. Does not use NADPH. May be the initial enzyme of the L-fucose degradation pathway in mammals. This chain is L-fucose dehydrogenase, found in Homo sapiens (Human).